A 432-amino-acid polypeptide reads, in one-letter code: 3-phosphoshikimate 1-carboxyvinyltransferase (432 aa).

The 3-phosphoshikimate site is built by Lys22, Ser23, and Arg27. Lys22 contributes to the phosphoenolpyruvate binding site. Phosphoenolpyruvate contacts are provided by Gly96 and Arg127. 3-phosphoshikimate-binding residues include Ser173, Ser174, Gln175, Ser201, Asp316, Asn339, and Lys343. Gln175 contacts phosphoenolpyruvate. Residue Asp316 is the Proton acceptor of the active site. Residues Arg347, Arg391, and Lys416 each contribute to the phosphoenolpyruvate site.

Belongs to the EPSP synthase family. Monomer.

The protein resides in the cytoplasm. The enzyme catalyses 3-phosphoshikimate + phosphoenolpyruvate = 5-O-(1-carboxyvinyl)-3-phosphoshikimate + phosphate. The protein operates within metabolic intermediate biosynthesis; chorismate biosynthesis; chorismate from D-erythrose 4-phosphate and phosphoenolpyruvate: step 6/7. Its function is as follows. Catalyzes the transfer of the enolpyruvyl moiety of phosphoenolpyruvate (PEP) to the 5-hydroxyl of shikimate-3-phosphate (S3P) to produce enolpyruvyl shikimate-3-phosphate and inorganic phosphate. This is 3-phosphoshikimate 1-carboxyvinyltransferase from Actinobacillus pleuropneumoniae serotype 7 (strain AP76).